The primary structure comprises 225 residues: Ribonuclease T (225 aa).

The disordered stretch occupies residues 1 to 21 (MSEDHFDDEHEGHGGGGGSRH). The 175-residue stretch at 33–207 (VVVDVETGGF…YDTEKTAELF (175 aa)) folds into the Exonuclease domain. Residues D36, E38, H194, and D199 each coordinate Mg(2+). The active-site Proton donor/acceptor is the H194.

The protein belongs to the RNase T family. In terms of assembly, homodimer. The cofactor is Mg(2+).

Trims short 3' overhangs of a variety of RNA species, leaving a one or two nucleotide 3' overhang. Responsible for the end-turnover of tRNA: specifically removes the terminal AMP residue from uncharged tRNA (tRNA-C-C-A). Also appears to be involved in tRNA biosynthesis. This Pseudomonas syringae pv. syringae (strain B728a) protein is Ribonuclease T.